Reading from the N-terminus, the 373-residue chain is Protein translocase subunit SecF (373 aa).

6 helical membrane-spanning segments follow: residues 26–46 (IWYG…AVRG), 142–162 (WQGL…AFEW), 166–186 (LAAF…YALV), 193–213 (GTVI…VVVF), 251–271 (VVAL…LGAG), and 280–300 (LFVG…PLVA). The span at 322–332 (QGAAKGESAES) shows a compositional bias: low complexity. Residues 322–373 (QGAAKGESAESAADEGAYDADEPDDAAPAVVGPRNQPASRGRGRGRPSGKRR) form a disordered region. Positions 333 to 346 (AADEGAYDADEPDD) are enriched in acidic residues. Over residues 362–373 (GRGRGRPSGKRR) the composition is skewed to basic residues.

It belongs to the SecD/SecF family. SecF subfamily. Forms a complex with SecD. Part of the essential Sec protein translocation apparatus which comprises SecA, SecYEG and auxiliary proteins SecDF. Other proteins may also be involved.

It is found in the cell membrane. Part of the Sec protein translocase complex. Interacts with the SecYEG preprotein conducting channel. SecDF uses the proton motive force (PMF) to complete protein translocation after the ATP-dependent function of SecA. This is Protein translocase subunit SecF from Streptomyces coelicolor (strain ATCC BAA-471 / A3(2) / M145).